The following is a 422-amino-acid chain: Aliphatic (R)-hydroxynitrile lyase (422 aa).

Zn(2+)-binding residues include C63, H85, C115, C118, C121, C129, and C199.

Belongs to the zinc-containing alcohol dehydrogenase family. In terms of assembly, homodimer. The cofactor is Zn(2+).

The catalysed reaction is (2R)-2-hydroxy-2-methylbutanenitrile = butan-2-one + hydrogen cyanide. Its function is as follows. Involved in the catabolism of cyanogenic glycosides. Naturally occurring substrates are the aliphatic acetone cyanohydrin and butan-2-one cyanohydrin, which are the aglycones of the cyanogenic glycosides linamarin, lotaustralin, linustatin and neolinustatin. Can use various aliphatic ketones and aldehydes as substrates, but not aromatic ketones. The protein is Aliphatic (R)-hydroxynitrile lyase of Linum usitatissimum (Flax).